We begin with the raw amino-acid sequence, 1295 residues long: Nonribosomal peptide synthetase resC (1295 aa).

The tract at residues 1 to 24 (MDLTTTSHARVDSGGVPFTSSLND) is disordered. The tract at residues 221–624 (KDVVDASPQA…EGRKDTQIKL (404 aa)) is adenylation. Residues 759–836 (ESANPAEENL…DQANLLRPLV (78 aa)) form the Carrier domain. S796 bears the O-(pantetheine 4'-phosphoryl)serine mark. Residues 873–1284 (EDVYPCTPYQ…DEYSQTLHEL (412 aa)) are condensation.

Belongs to the NRP synthetase family. The cofactor is pantetheine 4'-phosphate.

It catalyses the reaction restrictinol + glycine + H(+) = restricticin + H2O. The protein operates within antifungal biosynthesis. In terms of biological role, nonribosomal peptide synthetase; part of the gene cluster that mediates the biosynthesis of the tetrahydropyranyl antifungal agent restricticin that acts as an inhibitor of CYP51 and blocks the ergosterol biosynthesis. Within the pathway, resC catalyzes the C3 esterification of restrictinol with glycine to yield restricticin. ResC represents an example of the emerging class of single-module NRPS-like enzymes that perform esterification reactions. The highly reducing polyketide synthase resH, the short chain dehydrogenase resG, the cyclase resF, the FAD-dependent monooxygenase resA and the enoylreductase resD are required to generate the first stable intermediate desmethylrestrictinol. ResH with resD biosynthesize the first polyketide chain intermediate that is reduced by resG, followed by epoxidation by resA before 6-endo cyclization via epoxide opening by resF leads to desmethylrestrictinol. The methyltransferase resE then catalyzes the C4 O-methylation of desmethylrestrictinol to produce restrictinol, and the nonribosomal peptide synthetase resC catalyzes the C3 esterification of restrictinol with glycine that leads to restricticin. This chain is Nonribosomal peptide synthetase resC, found in Aspergillus sclerotiorum.